Reading from the N-terminus, the 249-residue chain is Triosephosphate isomerase (249 aa).

9–11 (NWK) lines the substrate pocket. His94 (electrophile) is an active-site residue. The active-site Proton acceptor is Glu166. Substrate-binding positions include Gly172, Ser212, and 233 to 234 (GG).

It belongs to the triosephosphate isomerase family. In terms of assembly, homodimer.

It is found in the cytoplasm. The enzyme catalyses D-glyceraldehyde 3-phosphate = dihydroxyacetone phosphate. It functions in the pathway carbohydrate biosynthesis; gluconeogenesis. The protein operates within carbohydrate degradation; glycolysis; D-glyceraldehyde 3-phosphate from glycerone phosphate: step 1/1. Functionally, involved in the gluconeogenesis. Catalyzes stereospecifically the conversion of dihydroxyacetone phosphate (DHAP) to D-glyceraldehyde-3-phosphate (G3P). This is Triosephosphate isomerase from Treponema pallidum (strain Nichols).